A 190-amino-acid chain; its full sequence is Large ribosomal subunit protein bL9 (190 aa).

Belongs to the bacterial ribosomal protein bL9 family.

In terms of biological role, binds to the 23S rRNA. This Rhodobacter capsulatus (strain ATCC BAA-309 / NBRC 16581 / SB1003) protein is Large ribosomal subunit protein bL9.